A 425-amino-acid polypeptide reads, in one-letter code: Inositol hexakisphosphate kinase 2 (425 aa).

ATP is bound by residues glutamate 206 to leucine 208 and aspartate 219. Residues proline 215–glycine 223, lysine 221, and lysine 235–lysine 242 contribute to the substrate site. Aspartate 382 lines the ATP pocket. Histidine 385 serves as a coordination point for substrate.

The protein belongs to the inositol phosphokinase (IPK) family. In terms of tissue distribution, detected in kidney, intestine, liver and heart.

It localises to the nucleus. It catalyses the reaction 1D-myo-inositol hexakisphosphate + ATP = 5-diphospho-1D-myo-inositol 1,2,3,4,6-pentakisphosphate + ADP. The protein operates within phospholipid metabolism; phosphatidylinositol metabolism. Its function is as follows. Converts inositol hexakisphosphate (InsP6) to diphosphoinositol pentakisphosphate (InsP7/PP-InsP5). This Oryctolagus cuniculus (Rabbit) protein is Inositol hexakisphosphate kinase 2 (IP6K2).